The primary structure comprises 31 residues: Protamine-YI (31 aa).

Positions 1–31 (ARRRRSSSRPIRRRRPRRRTTRRRRAGRRRR) are disordered.

Testis.

It localises to the nucleus. Its subcellular location is the chromosome. Functionally, protamines substitute for histones in the chromatin of sperm during the haploid phase of spermatogenesis. They compact sperm DNA into a highly condensed, stable and inactive complex. The sequence is that of Protamine-YI from Clupea harengus (Atlantic herring).